The following is a 170-amino-acid chain: Adenine phosphoribosyltransferase (170 aa).

The protein belongs to the purine/pyrimidine phosphoribosyltransferase family. Homodimer.

It is found in the cytoplasm. The catalysed reaction is AMP + diphosphate = 5-phospho-alpha-D-ribose 1-diphosphate + adenine. The protein operates within purine metabolism; AMP biosynthesis via salvage pathway; AMP from adenine: step 1/1. Catalyzes a salvage reaction resulting in the formation of AMP, that is energically less costly than de novo synthesis. This Alkaliphilus metalliredigens (strain QYMF) protein is Adenine phosphoribosyltransferase.